Reading from the N-terminus, the 370-residue chain is Cytochrome b (370 aa).

Transmembrane regions (helical) follow at residues phenylalanine 25–valine 45, tryptophan 69–isoleucine 90, tryptophan 105–leucine 125, and phenylalanine 170–leucine 190. Histidine 75 and histidine 89 together coordinate heme b. Heme b contacts are provided by histidine 174 and histidine 188. Histidine 193 contributes to the a ubiquinone binding site. The next 4 membrane-spanning stretches (helical) occupy residues tyrosine 218–phenylalanine 238, leucine 280–histidine 300, leucine 312–threonine 332, and phenylalanine 339–proline 358.

The protein belongs to the cytochrome b family. In terms of assembly, the cytochrome bc1 complex contains 3 respiratory subunits (MT-CYB, CYC1 and UQCRFS1), 2 core proteins (UQCRC1 and UQCRC2) and probably 6 low-molecular weight proteins. Heme b is required as a cofactor.

It localises to the mitochondrion inner membrane. Functionally, component of the ubiquinol-cytochrome c reductase complex (complex III or cytochrome b-c1 complex) that is part of the mitochondrial respiratory chain. The b-c1 complex mediates electron transfer from ubiquinol to cytochrome c. Contributes to the generation of a proton gradient across the mitochondrial membrane that is then used for ATP synthesis. In Chilabothrus subflavus (Jamaican yellow boa), this protein is Cytochrome b (MT-CYB).